A 420-amino-acid polypeptide reads, in one-letter code: Serine hydroxymethyltransferase (420 aa).

Residues Leu121 and Gly125 to Leu127 contribute to the (6S)-5,6,7,8-tetrahydrofolate site. At Lys230 the chain carries N6-(pyridoxal phosphate)lysine. Ser355–Phe357 is a (6S)-5,6,7,8-tetrahydrofolate binding site.

This sequence belongs to the SHMT family. As to quaternary structure, homodimer. Pyridoxal 5'-phosphate is required as a cofactor.

Its subcellular location is the cytoplasm. It catalyses the reaction (6R)-5,10-methylene-5,6,7,8-tetrahydrofolate + glycine + H2O = (6S)-5,6,7,8-tetrahydrofolate + L-serine. It functions in the pathway one-carbon metabolism; tetrahydrofolate interconversion. The protein operates within amino-acid biosynthesis; glycine biosynthesis; glycine from L-serine: step 1/1. Its function is as follows. Catalyzes the reversible interconversion of serine and glycine with tetrahydrofolate (THF) serving as the one-carbon carrier. This reaction serves as the major source of one-carbon groups required for the biosynthesis of purines, thymidylate, methionine, and other important biomolecules. Also exhibits THF-independent aldolase activity toward beta-hydroxyamino acids, producing glycine and aldehydes, via a retro-aldol mechanism. This chain is Serine hydroxymethyltransferase, found in Streptococcus gordonii (strain Challis / ATCC 35105 / BCRC 15272 / CH1 / DL1 / V288).